The sequence spans 409 residues: uncharacterized protein (409 aa).

In terms of domain architecture, HTH arsR-type spans 305-409; the sequence is LTKIDEKVVK…LIGEDDELEM (105 aa).

This is an uncharacterized protein from Methanocaldococcus jannaschii (strain ATCC 43067 / DSM 2661 / JAL-1 / JCM 10045 / NBRC 100440) (Methanococcus jannaschii).